Consider the following 994-residue polypeptide: Translocase of chloroplast 108, chloroplastic (994 aa).

Disordered regions lie at residues 14 to 61 (KEAS…EDEP), 84 to 124 (TTDL…DPSV), and 152 to 287 (AVDG…DETR). Polar residues-rich tracts occupy residues 37–53 (GETT…ANES) and 84–98 (TTDL…TPSN). Over residues 99-121 (AEKESPEATEVRIVEEGKLEKAD) the composition is skewed to basic and acidic residues. Acidic residues predominate over residues 166-197 (NDGDTDANTADEDNENDEDDVDEDEDEDDADM). Positions 249 to 268 (ASDSPGRNTQRPNGALSTQI) are enriched in polar residues. The segment covering 269–280 (TSTTDESASSDA) has biased composition (low complexity). The region spanning 360-589 (DFACTILVLG…KLQETTAPGR (230 aa)) is the AIG1-type G domain. The interval 369-376 (GKTGVGKS) is G1. 372-377 (GVGKSS) contributes to the GTP binding site. Serine 376 is a binding site for Mg(2+). Residues 395–399 (PSTNK) are G2. Positions 416-419 (DTPG) are G3. The segment at 488 to 491 (THAS) is G4. GTP contacts are provided by residues histidine 489 and 537–538 (EN). The tract at residues 537 to 539 (ENH) is G5. Disordered stretches follow at residues 616–659 (LPDE…EDLT) and 691–716 (EAKK…EAGN). Over residues 620–643 (QAGESDESDDDEEEEDSDADDYDE) the composition is skewed to acidic residues. The segment covering 650–659 (LSKEELEDLT) has biased composition (basic and acidic residues). A compositionally biased stretch (acidic residues) spans 705-714 (AEAEEAEDEA). Residues 969-989 (MVLIGIVPILRSLINCRFGFG) traverse the membrane as a helical segment.

It belongs to the TRAFAC class TrmE-Era-EngA-EngB-Septin-like GTPase superfamily. AIG1/Toc34/Toc159-like paraseptin GTPase family. TOC159 subfamily. In terms of assembly, part of the TOC core complex. It depends on Mg(2+) as a cofactor.

The protein localises to the plastid. Its subcellular location is the chloroplast outer membrane. In terms of biological role, GTPase involved in protein precursor import into chloroplasts. Seems to recognize chloroplast-destined precursor proteins and regulate their presentation to the translocation channel through GTP hydrolysis. Probably specialized in the import of nuclear encoded non-photosynthetic preproteins from the cytoplasm to the chloroplast. The chain is Translocase of chloroplast 108, chloroplastic from Physcomitrium patens (Spreading-leaved earth moss).